Reading from the N-terminus, the 602-residue chain is Elongation factor 4 (602 aa).

Residues 5–187 (DHIRNFSIIA…ALVKRIPAPK (183 aa)) form the tr-type G domain. GTP-binding positions include 17–22 (DHGKST) and 134–137 (NKID).

This sequence belongs to the TRAFAC class translation factor GTPase superfamily. Classic translation factor GTPase family. LepA subfamily.

Its subcellular location is the cell inner membrane. It catalyses the reaction GTP + H2O = GDP + phosphate + H(+). Functionally, required for accurate and efficient protein synthesis under certain stress conditions. May act as a fidelity factor of the translation reaction, by catalyzing a one-codon backward translocation of tRNAs on improperly translocated ribosomes. Back-translocation proceeds from a post-translocation (POST) complex to a pre-translocation (PRE) complex, thus giving elongation factor G a second chance to translocate the tRNAs correctly. Binds to ribosomes in a GTP-dependent manner. The polypeptide is Elongation factor 4 (Zymomonas mobilis subsp. mobilis (strain ATCC 31821 / ZM4 / CP4)).